We begin with the raw amino-acid sequence, 433 residues long: Tubulin epsilon and delta complex protein 2 (433 aa).

Disordered stretches follow at residues 45 to 69 (TGTRALKPPPGPETNGEDPLPACTP), 95 to 169 (TKAG…VGMG), and 326 to 345 (QPPRPCPVGRPPGASPSCGG). Polar residues predominate over residues 107–120 (KSRSIVTSSGTTAS). S159 is subject to Phosphoserine. The span at 327 to 339 (PPRPCPVGRPPGA) shows a compositional bias: pro residues.

In terms of assembly, interacts with TEDC1. Found in a complex with TEDC1, TEDC2, TUBE1 and TUBD1.

The protein resides in the cell projection. It localises to the cilium. The protein localises to the cytoplasm. It is found in the cytoskeleton. Its subcellular location is the microtubule organizing center. The protein resides in the centrosome. It localises to the centriole. Functionally, acts as a positive regulator of ciliary hedgehog signaling. Required for centriole stability. This is Tubulin epsilon and delta complex protein 2 from Homo sapiens (Human).